The sequence spans 139 residues: Short neuropeptide F (139 aa).

The propeptide occupies 1 to 23 (MGRARRTVRAPAQHDALGGHALA). The tract at residues 1 to 48 (MGRARRTVRAPAQHDALGGHALARKSVRSPSRRLRFGRRSDPDMPPQA) is disordered. A compositionally biased stretch (basic residues) spans 22 to 37 (LARKSVRSPSRRLRFG). Phenylalanine amide is present on phenylalanine 36. Positions 40–62 (SDPDMPPQAPLDEMNELLSLREV) are excised as a propeptide. Phenylalanine amide is present on phenylalanine 70. The propeptide occupies 74–96 (SEERAVPHIFPQEFLTQEQDRAV). At phenylalanine 105 the chain carries Phenylalanine amide. Residues 109 to 139 (SDNNMFLLPYESALPQEVKANGSVEDDRQQE) constitute a propeptide that is removed on maturation.

Belongs to the NPY family. In terms of tissue distribution, sNPF peptide 1: Expressed in corpora cardiaca (CC), corpora allata (CA), antennal lobe (AL) and gnathal ganglion (GNG) (at protein level). Expression in AL detected in all animals, in GNG in most animals, expression in CC and CA in some animals (at protein level). sNPF peptide 2: Expressed in corpora cardiaca (CC), corpora allata (CA), antennal lobe (AL) and gnathal ganglion (GNG) (at protein level). Expression in AL detected in all animals, in GNG, CC and CA in most animals (at protein level). sNPF peptide 3: Expressed in corpora cardiaca (CC), corpora allata (CA), antennal lobe (AL) and gnathal ganglion (GNG) (at protein level). Expression detected in all animals (at protein level).

Its subcellular location is the secreted. Its function is as follows. Plays a role in controlling food intake and regulating body size. This chain is Short neuropeptide F, found in Agrotis ipsilon (Black cutworm moth).